The chain runs to 171 residues: S-ribosylhomocysteine lyase (171 aa).

Fe cation-binding residues include His-54, His-58, and Cys-128.

It belongs to the LuxS family. Homodimer. The cofactor is Fe cation.

The catalysed reaction is S-(5-deoxy-D-ribos-5-yl)-L-homocysteine = (S)-4,5-dihydroxypentane-2,3-dione + L-homocysteine. In terms of biological role, involved in the synthesis of autoinducer 2 (AI-2) which is secreted by bacteria and is used to communicate both the cell density and the metabolic potential of the environment. The regulation of gene expression in response to changes in cell density is called quorum sensing. Catalyzes the transformation of S-ribosylhomocysteine (RHC) to homocysteine (HC) and 4,5-dihydroxy-2,3-pentadione (DPD). The protein is S-ribosylhomocysteine lyase of Serratia proteamaculans (strain 568).